The following is a 1612-amino-acid chain: Roundabout homolog 1 (1612 aa).

Positions Met1 to Gly19 are cleaved as a signal peptide. The Extracellular portion of the chain corresponds to Ser20 to Pro858. 5 Ig-like C2-type domains span residues Pro29–Glu125, Asp131–Thr218, Pro223–Thr307, Pro312–Thr407, and Pro416–Glu502. Cys50 and Cys108 are disulfide-bonded. N-linked (GlcNAc...) asparagine glycosylation is present at Asn121. 3 cysteine pairs are disulfide-bonded: Cys152/Cys201, Cys244/Cys291, and Cys333/Cys389. A glycan (N-linked (GlcNAc...) asparagine) is linked at Asn424. A disulfide bridge links Cys437 with Cys486. Fibronectin type-III domains are found at residues Ala524–Val618, Val637–Glu734, and Pro739–His835. Residues Asn751, Asn781, and Asn788 are each glycosylated (N-linked (GlcNAc...) asparagine). Residues Ala859–Leu879 traverse the membrane as a helical segment. The Cytoplasmic portion of the chain corresponds to Tyr880–Ser1612. A Phosphoserine modification is found at Ser901. Thr909 carries the phosphothreonine modification. At Tyr999 the chain carries Phosphotyrosine. Phosphoserine is present on Ser1016. The residue at position 1034 (Tyr1034) is a Phosphotyrosine. The tract at residues Ser1045 to Pro1068 is disordered. At Tyr1075 the chain carries Phosphotyrosine. 3 disordered regions span residues Arg1088–Glu1298, Glu1313–Phe1358, and Arg1381–Ser1612. The span at Pro1098–Thr1107 shows a compositional bias: polar residues. Residues Gly1108 to Gln1124 are compositionally biased toward low complexity. Positions Leu1147–His1157 are enriched in pro residues. A Phosphothreonine modification is found at Thr1201. Positions Tyr1216–Glu1230 are enriched in polar residues. The segment covering Asp1242 to Arg1254 has biased composition (basic and acidic residues). Positions Val1257–Pro1268 are enriched in pro residues. Ser1258 carries the post-translational modification Phosphoserine. The span at Met1283–Met1297 shows a compositional bias: acidic residues. Low complexity predominate over residues Ser1345 to Phe1358. Polar residues predominate over residues Pro1399 to Ser1412. Basic residues predominate over residues Arg1420–His1431. Residues Leu1441–Ile1451 show a composition bias toward pro residues. Basic and acidic residues-rich tracts occupy residues Ala1477–Thr1502 and Asp1510–Pro1534. The segment covering Phe1553–Pro1562 has biased composition (polar residues). Over residues Ser1563–Ser1575 the composition is skewed to low complexity. Residues Asn1603 to Ser1612 show a composition bias toward acidic residues.

This sequence belongs to the immunoglobulin superfamily. ROBO family. In terms of assembly, homodimer. Dimerization is mediated by the extracellular domain and is independent of SLIT liganding. Interacts with SLIT1 Interacts with SLIT2. Interacts with FLRT3. Interacts with MYO9B (via Rho-GAP domain). In terms of processing, ubiquitinated. May be deubiquitinated by USP33. As to expression, detected in embryonic thalamus neurons (at protein level). Expressed in embryonal spinal cord. Expressed in embryonal lung, and in adult lung bronchial epithelial cells of large proximal airways.

The protein resides in the cell membrane. The protein localises to the cell projection. It is found in the axon. Its subcellular location is the endoplasmic reticulum-Golgi intermediate compartment membrane. In terms of biological role, receptor for SLIT1 and SLIT2 that mediates cellular responses to molecular guidance cues in cellular migration, including axonal navigation at the ventral midline of the neural tube and projection of axons to different regions during neuronal development. Interaction with the intracellular domain of FLRT3 mediates axon attraction towards cells expressing NTN1. In axon growth cones, the silencing of the attractive effect of NTN1 by SLIT2 may require the formation of a ROBO1-DCC complex. Plays a role in the regulation of cell migration via its interaction with MYO9B; inhibits MYO9B-mediated stimulation of RHOA GTPase activity, and thereby leads to increased levels of active, GTP-bound RHOA. May be required for lung development. This chain is Roundabout homolog 1 (Robo1), found in Mus musculus (Mouse).